The chain runs to 309 residues: Protein FdhE homolog (309 aa).

It belongs to the FdhE family.

The protein localises to the cytoplasm. Its function is as follows. Necessary for formate dehydrogenase activity. The chain is Protein FdhE homolog from Enterobacter sp. (strain 638).